Here is a 535-residue protein sequence, read N- to C-terminus: Reticuline oxidase (535 aa).

The N-terminal stretch at 1–23 (MMCRSLTLRFFLFIVLLQTCVRG) is a signal peptide. An N-linked (GlcNAc...) asparagine glycan is attached at N42. In terms of domain architecture, FAD-binding PCMH-type spans 71–245 (TVSKPSFIVM…YAWKIKLLPV (175 aa)). The 6-(S-cysteinyl)-8alpha-(pros-histidyl)-FAD (His-Cys) cross-link spans 108–170 (HSYEGLSYTA…DTLGFTAGWC (63 aa)). The N-linked (GlcNAc...) asparagine glycan is linked to N475.

The protein belongs to the oxygen-dependent FAD-linked oxidoreductase family. It depends on FAD as a cofactor. Requires a metal cation as cofactor. The FAD cofactor is bound via a bicovalent 6-S-cysteinyl, 8alpha-N1-histidyl FAD linkage. As to expression, expressed in roots and stems. Not detected in leaves or reproductive organs. Restricted to the parietal region of sieve elements adjacent or proximal to laticifers.

Its subcellular location is the cytoplasmic vesicle. The catalysed reaction is (S)-reticuline + O2 = (S)-scoulerine + H2O2 + H(+). The protein operates within alkaloid biosynthesis; (S)-scoulerine biosynthesis; (S)-scoulerine from (S)-reticuline: step 1/1. Oxygen-dependent FAD-dependent oxidoreductase essential to the formation of benzophenanthridine alkaloids in the response of plants to pathogenic attack. Catalyzes the stereospecific conversion of the N-methyl moiety of (S)-reticuline into the berberine bridge carbon of (S)-scoulerine. Involved in the biosynthesis of sanguinarine. In Papaver somniferum (Opium poppy), this protein is Reticuline oxidase (BBE1).